The sequence spans 152 residues: Dimethylsulfoniopropionate lyase DddW (152 aa).

The 56-residue stretch at 69-124 (IAEFGPGHQLRPHRHTPPEFYLGLEGSGIVTIDGVPHEIRAGVALYIPGDAEHGTV) folds into the Cupin type-2 domain. Residues His83, Glu87, Tyr89, and His121 each coordinate Fe cation.

It belongs to the non-heme iron-dependent dioxygenase family. In terms of assembly, homodimer. Requires Fe(2+) as cofactor.

The enzyme catalyses S,S-dimethyl-beta-propiothetin = acrylate + dimethyl sulfide + H(+). Its function is as follows. Able to cleave dimethylsulfoniopropionate (DMSP), releasing dimethyl sulfide (DMS) and acrylate. DMS is the principal form by which sulfur is transported from oceans to the atmosphere. In Ruegeria pomeroyi (strain ATCC 700808 / DSM 15171 / DSS-3) (Silicibacter pomeroyi), this protein is Dimethylsulfoniopropionate lyase DddW.